We begin with the raw amino-acid sequence, 421 residues long: Aspartokinase (421 aa).

7–10 provides a ligand contact to ATP; sequence KYGG. 25-30 lines the substrate pocket; sequence RIVATK. Ser41 contributes to the ATP binding site. Substrate-binding positions include 45–49, Glu74, 125–126, 151–154, and Ser154; these read DTTDD, LE, and RGGS. Residues 174–175, 180–185, and Lys210 each bind ATP; these read TD and FSADPR. ACT domains lie at 267–348 and 349–421; these read VTIV…GKVS and LIGA…GTGR. Substrate-binding positions include Asp274, 274-279, 292-294, Gln298, 360-361, 374-375, and 381-382; these read DIPGYA, NID, VT, NI, and SE.

The protein belongs to the aspartokinase family. Heterotetramer consisting of 2 isoforms Alpha (catalytic and regulation) and of a homodimer of 2 isoforms Beta (regulation).

It catalyses the reaction L-aspartate + ATP = 4-phospho-L-aspartate + ADP. The protein operates within amino-acid biosynthesis; L-lysine biosynthesis via DAP pathway; (S)-tetrahydrodipicolinate from L-aspartate: step 1/4. It functions in the pathway amino-acid biosynthesis; L-methionine biosynthesis via de novo pathway; L-homoserine from L-aspartate: step 1/3. Its pathway is amino-acid biosynthesis; L-threonine biosynthesis; L-threonine from L-aspartate: step 1/5. Its activity is regulated as follows. Feedback inhibition by lysine and threonine. In terms of biological role, catalyzes the phosphorylation of the beta-carboxyl group of aspartic acid with ATP to yield 4-phospho-L-aspartate, which is involved in the branched biosynthetic pathway leading to the biosynthesis of amino acids lysine, threonine, isoleucine and methionine. This chain is Aspartokinase (ask), found in Mycobacterium bovis (strain ATCC BAA-935 / AF2122/97).